The sequence spans 226 residues: ATP synthase F(0) complex subunit a (226 aa).

The next 6 helical transmembrane spans lie at 11–31, 68–88, 97–117, 138–158, 164–184, and 189–209; these read APSM…SILF, WALM…LGLL, QLSM…ITGF, IPML…ALAV, ITAG…LINI, and AFIT…VALI.

This sequence belongs to the ATPase A chain family. As to quaternary structure, component of the ATP synthase complex composed at least of ATP5F1A/subunit alpha, ATP5F1B/subunit beta, ATP5MC1/subunit c (homooctomer), MT-ATP6/subunit a, MT-ATP8/subunit 8, ATP5ME/subunit e, ATP5MF/subunit f, ATP5MG/subunit g, ATP5MK/subunit k, ATP5MJ/subunit j, ATP5F1C/subunit gamma, ATP5F1D/subunit delta, ATP5F1E/subunit epsilon, ATP5PF/subunit F6, ATP5PB/subunit b, ATP5PD/subunit d, ATP5PO/subunit OSCP. ATP synthase complex consists of a soluble F(1) head domain (subunits alpha(3) and beta(3)) - the catalytic core - and a membrane F(0) domain - the membrane proton channel (subunits c, a, 8, e, f, g, k and j). These two domains are linked by a central stalk (subunits gamma, delta, and epsilon) rotating inside the F1 region and a stationary peripheral stalk (subunits F6, b, d, and OSCP). Interacts with DNAJC30; interaction is direct.

The protein resides in the mitochondrion inner membrane. It catalyses the reaction H(+)(in) = H(+)(out). In terms of biological role, subunit a, of the mitochondrial membrane ATP synthase complex (F(1)F(0) ATP synthase or Complex V) that produces ATP from ADP in the presence of a proton gradient across the membrane which is generated by electron transport complexes of the respiratory chain. ATP synthase complex consist of a soluble F(1) head domain - the catalytic core - and a membrane F(1) domain - the membrane proton channel. These two domains are linked by a central stalk rotating inside the F(1) region and a stationary peripheral stalk. During catalysis, ATP synthesis in the catalytic domain of F(1) is coupled via a rotary mechanism of the central stalk subunits to proton translocation. With the subunit c (ATP5MC1), forms the proton-conducting channel in the F(0) domain, that contains two crucial half-channels (inlet and outlet) that facilitate proton movement from the mitochondrial intermembrane space (IMS) into the matrix. Protons are taken up via the inlet half-channel and released through the outlet half-channel, following a Grotthuss mechanism. The protein is ATP synthase F(0) complex subunit a of Canis lupus familiaris (Dog).